The chain runs to 468 residues: Putative FBD-associated F-box protein At5g22720 (468 aa).

Residues 22-68 form the F-box domain; sequence EDLISQLPDSLITQILFYLQTKKAVTTSVLSKRWRSLWLSTPGLVLI. In terms of domain architecture, FBD spans 375–433; sequence ELRLSFVPRCLLSSLEFVEIKGCSRSNMERVKYVGEPIETKLARYFVENSTILKKLVLP.

This is Putative FBD-associated F-box protein At5g22720 from Arabidopsis thaliana (Mouse-ear cress).